A 363-amino-acid polypeptide reads, in one-letter code: Aminomethyltransferase (363 aa).

Belongs to the GcvT family. As to quaternary structure, the glycine cleavage system is composed of four proteins: P, T, L and H.

It catalyses the reaction N(6)-[(R)-S(8)-aminomethyldihydrolipoyl]-L-lysyl-[protein] + (6S)-5,6,7,8-tetrahydrofolate = N(6)-[(R)-dihydrolipoyl]-L-lysyl-[protein] + (6R)-5,10-methylene-5,6,7,8-tetrahydrofolate + NH4(+). Its function is as follows. The glycine cleavage system catalyzes the degradation of glycine. The sequence is that of Aminomethyltransferase from Nitrosomonas eutropha (strain DSM 101675 / C91 / Nm57).